Consider the following 219-residue polypeptide: Cyclin-U4-3 (219 aa).

This sequence belongs to the cyclin family. Cyclin U/P subfamily. In terms of assembly, interacts with CDKA-1. As to expression, expressed at low levels in roots, stems and flowers. Expressed in the shoot apex, leaf primordia and young leaves.

The protein is Cyclin-U4-3 (CYCU4-3) of Arabidopsis thaliana (Mouse-ear cress).